Consider the following 406-residue polypeptide: Putative competence-damage inducible protein (406 aa).

The protein belongs to the CinA family.

This Natranaerobius thermophilus (strain ATCC BAA-1301 / DSM 18059 / JW/NM-WN-LF) protein is Putative competence-damage inducible protein.